The sequence spans 85 residues: uncharacterized protein (85 aa).

The disordered stretch occupies residues Met-1–Arg-85. A compositionally biased stretch (basic and acidic residues) spans Ala-47 to Gly-61.

This is an uncharacterized protein from Streptomyces lividans.